Here is a 91-residue protein sequence, read N- to C-terminus: Conotoxin Im9.1 (91 aa).

A signal peptide spans 1–23 (MSKVGVVPLIFLVLLSIAALQNG). The propeptide occupies 24–55 (DDPRRQRDEKQSPQGDILRSTLTKYSYNIQRR). 3 disulfide bridges follow: Cys56/Cys72, Cys63/Cys83, and Cys66/Cys86.

Belongs to the conotoxin M superfamily. In terms of tissue distribution, expressed by the venom duct.

It is found in the secreted. Functionally, probable neurotoxin. The chain is Conotoxin Im9.1 from Conus imperialis (Imperial cone).